The chain runs to 197 residues: Imidazoleglycerol-phosphate dehydratase (197 aa).

Belongs to the imidazoleglycerol-phosphate dehydratase family.

Its subcellular location is the cytoplasm. It catalyses the reaction D-erythro-1-(imidazol-4-yl)glycerol 3-phosphate = 3-(imidazol-4-yl)-2-oxopropyl phosphate + H2O. The protein operates within amino-acid biosynthesis; L-histidine biosynthesis; L-histidine from 5-phospho-alpha-D-ribose 1-diphosphate: step 6/9. The sequence is that of Imidazoleglycerol-phosphate dehydratase from Clostridium acetobutylicum (strain ATCC 824 / DSM 792 / JCM 1419 / IAM 19013 / LMG 5710 / NBRC 13948 / NRRL B-527 / VKM B-1787 / 2291 / W).